The chain runs to 312 residues: tRNA-cytidine(32) 2-sulfurtransferase (312 aa).

Residues S47 to S52 carry the PP-loop motif motif. Residues C122, C125, and C213 each contribute to the [4Fe-4S] cluster site.

Belongs to the TtcA family. Homodimer. Requires Mg(2+) as cofactor. [4Fe-4S] cluster is required as a cofactor.

The protein resides in the cytoplasm. The enzyme catalyses cytidine(32) in tRNA + S-sulfanyl-L-cysteinyl-[cysteine desulfurase] + AH2 + ATP = 2-thiocytidine(32) in tRNA + L-cysteinyl-[cysteine desulfurase] + A + AMP + diphosphate + H(+). Its pathway is tRNA modification. Functionally, catalyzes the ATP-dependent 2-thiolation of cytidine in position 32 of tRNA, to form 2-thiocytidine (s(2)C32). The sulfur atoms are provided by the cysteine/cysteine desulfurase (IscS) system. The chain is tRNA-cytidine(32) 2-sulfurtransferase from Actinobacillus succinogenes (strain ATCC 55618 / DSM 22257 / CCUG 43843 / 130Z).